A 643-amino-acid chain; its full sequence is Phosphomethylpyrimidine synthase (643 aa).

Residues Asn248, Met277, Tyr306, His342, 362–364 (SRG), 403–406 (DGLR), and Glu442 contribute to the substrate site. His446 contributes to the Zn(2+) binding site. Tyr469 serves as a coordination point for substrate. His510 contacts Zn(2+). [4Fe-4S] cluster is bound by residues Cys590, Cys593, and Cys598.

Belongs to the ThiC family. Homodimer. [4Fe-4S] cluster is required as a cofactor.

It catalyses the reaction 5-amino-1-(5-phospho-beta-D-ribosyl)imidazole + S-adenosyl-L-methionine = 4-amino-2-methyl-5-(phosphooxymethyl)pyrimidine + CO + 5'-deoxyadenosine + formate + L-methionine + 3 H(+). Its pathway is cofactor biosynthesis; thiamine diphosphate biosynthesis. In terms of biological role, catalyzes the synthesis of the hydroxymethylpyrimidine phosphate (HMP-P) moiety of thiamine from aminoimidazole ribotide (AIR) in a radical S-adenosyl-L-methionine (SAM)-dependent reaction. The chain is Phosphomethylpyrimidine synthase from Burkholderia lata (strain ATCC 17760 / DSM 23089 / LMG 22485 / NCIMB 9086 / R18194 / 383).